Reading from the N-terminus, the 322-residue chain is UDP-N-acetylenolpyruvoylglucosamine reductase (322 aa).

The region spanning 36–202 (RAGGPAQVLF…TSVLFEGVPG (167 aa)) is the FAD-binding PCMH-type domain. The active site involves Arg-182. Ser-231 acts as the Proton donor in catalysis. The active site involves Glu-301.

The protein belongs to the MurB family. The cofactor is FAD.

It localises to the cytoplasm. It catalyses the reaction UDP-N-acetyl-alpha-D-muramate + NADP(+) = UDP-N-acetyl-3-O-(1-carboxyvinyl)-alpha-D-glucosamine + NADPH + H(+). It functions in the pathway cell wall biogenesis; peptidoglycan biosynthesis. Functionally, cell wall formation. The sequence is that of UDP-N-acetylenolpyruvoylglucosamine reductase from Brucella canis (strain ATCC 23365 / NCTC 10854 / RM-666).